The following is a 187-amino-acid chain: Ribosome-recycling factor (187 aa).

Belongs to the RRF family.

The protein localises to the cytoplasm. Its function is as follows. Responsible for the release of ribosomes from messenger RNA at the termination of protein biosynthesis. May increase the efficiency of translation by recycling ribosomes from one round of translation to another. The sequence is that of Ribosome-recycling factor from Lactiplantibacillus plantarum (strain ATCC BAA-793 / NCIMB 8826 / WCFS1) (Lactobacillus plantarum).